Here is a 64-residue protein sequence, read N- to C-terminus: Protein DsrB (64 aa).

This sequence belongs to the DsrB family.

This is Protein DsrB from Salmonella arizonae (strain ATCC BAA-731 / CDC346-86 / RSK2980).